Reading from the N-terminus, the 126-residue chain is 3-aminoacrylate deaminase RutC (126 aa).

This sequence belongs to the RutC family.

It carries out the reaction (Z)-3-aminoacrylate + H2O + H(+) = 3-oxopropanoate + NH4(+). Functionally, involved in pyrimidine catabolism. Catalyzes the deamination of 3-aminoacrylate to malonic semialdehyde, a reaction that can also occur spontaneously. RutC may facilitate the reaction and modulate the metabolic fitness, rather than catalyzing essential functions. The polypeptide is 3-aminoacrylate deaminase RutC (Acinetobacter baylyi (strain ATCC 33305 / BD413 / ADP1)).